The chain runs to 1146 residues: Inositol hexakisphosphate and diphosphoinositol-pentakisphosphate kinase (1146 aa).

The interval 1-33 (MSGIKKEPIESDEVPQQETKNNLPSAPSEMSPL) is disordered. A compositionally biased stretch (polar residues) spans 16–25 (QQETKNNLPS). Residues S31, S54, and S77 each carry the phosphoserine modification. The segment at 93 to 185 (TALGNGNNTN…STSHPKPRLP (93 aa)) is disordered. A compositionally biased stretch (low complexity) spans 96 to 106 (GNGNNTNTVTT). Residues 110–120 (KKADSESKSEA) show a composition bias toward basic and acidic residues. The span at 125–144 (LSNSNIVNDADNINSISKTG) shows a compositional bias: polar residues. A compositionally biased stretch (low complexity) spans 164 to 178 (SVPTSSASSRKSSTS). 197–198 (AK) serves as a coordination point for substrate. ATP contacts are provided by residues R278, K351, H358, R377, 402–405 (EQFM), and 412–414 (DVK). Residue 377 to 378 (RK) coordinates substrate. Substrate contacts are provided by K414 and R428. ATP is bound by residues S430, D475, and 487–489 (DVN). 492–495 (SFVK) is a substrate binding site. Residues 530-597 (REEKEQKWVF…VLQALRIALD (68 aa)) are polyphosphoinositide-binding domain. Phosphoserine is present on residues S895 and S1107. Positions 1106 to 1146 (TSPNLSFQKRKTRRKSVSVEKLKRPASSGSSSSTSVNKTLD) are disordered.

Belongs to the histidine acid phosphatase family. VIP1 subfamily.

It localises to the cytoplasm. Its subcellular location is the cytoskeleton. The enzyme catalyses 1D-myo-inositol hexakisphosphate + ATP = 1-diphospho-1D-myo-inositol 2,3,4,5,6-pentakisphosphate + ADP. The catalysed reaction is 5-diphospho-1D-myo-inositol 1,2,3,4,6-pentakisphosphate + ATP + H(+) = 1,5-bis(diphospho)-1D-myo-inositol 2,3,4,6-tetrakisphosphate + ADP. Functionally, bifunctional inositol kinase that acts in concert with the IP6K kinases to synthesize the diphosphate group-containing inositol pyrophosphates diphosphoinositol pentakisphosphate, PP-InsP5, and bis-diphosphoinositol tetrakisphosphate, (PP)2-InsP4. Phosphorylates inositol hexakisphosphate (InsP6) at position 1 to produce PP-InsP5 which is in turn phosphorylated by IP6Ks to produce (PP)2-InsP4. Alternatively, phosphorylates PP-InsP5 at position 1, produced by IP6Ks from InsP6, to produce (PP)2-InsP4. Required for maintaining cellular integrity, normal growth and interactions with the ARP complex. Acts as a regulator of the PHO80-PHO85 cyclin/cyclin-dependent kinase (CDK) complex, thereby regulating signaling of phosphate availability. Required for the function of the cortical actin cytoskeleton, possibly by participating in correct F-actin localization and ensuring polarized growth. Regulates polarized growth and modulates interphase microtubule cytoskeleton. Regulates microtubule dynamics without the requirement of microtubule plus-end tracking protein Mal3. Required for growth zone selection. The chain is Inositol hexakisphosphate and diphosphoinositol-pentakisphosphate kinase from Saccharomyces cerevisiae (strain ATCC 204508 / S288c) (Baker's yeast).